The following is a 75-amino-acid chain: High-potential iron-sulfur protein (75 aa).

4 residues coordinate [4Fe-4S] cluster: cysteine 38, cysteine 41, cysteine 54, and cysteine 68.

Homodimer. Monomer at different ionic strengths.

Specific class of high-redox-potential 4Fe-4S ferredoxins. Functions in anaerobic electron transport in most purple and in some other photosynthetic bacteria and in at least one genus (Paracoccus) of halophilic, denitrifying bacteria. Competent in photosynthetic electron transfer to oxidized cytochrome bc1 complex via the membrane-bound c-type tetraheme. The sequence is that of High-potential iron-sulfur protein (hip) from Rhodoferax fermentans.